The primary structure comprises 101 residues: Protein RnfH (101 aa).

It belongs to the UPF0125 (RnfH) family.

The sequence is that of Protein RnfH from Pseudomonas aeruginosa (strain LESB58).